Here is a 462-residue protein sequence, read N- to C-terminus: Glutamate--tRNA ligase 1 (462 aa).

A 'HIGH' region motif is present at residues 8–18 (PSPTGYLHIGG). Residues 237–241 (KLSKR) carry the 'KMSKS' region motif. Lys-240 provides a ligand contact to ATP.

The protein belongs to the class-I aminoacyl-tRNA synthetase family. Glutamate--tRNA ligase type 1 subfamily. In terms of assembly, monomer.

The protein localises to the cytoplasm. The catalysed reaction is tRNA(Glu) + L-glutamate + ATP = L-glutamyl-tRNA(Glu) + AMP + diphosphate. Functionally, catalyzes the attachment of glutamate to tRNA(Glu) in a two-step reaction: glutamate is first activated by ATP to form Glu-AMP and then transferred to the acceptor end of tRNA(Glu). The sequence is that of Glutamate--tRNA ligase 1 from Campylobacter hominis (strain ATCC BAA-381 / DSM 21671 / CCUG 45161 / LMG 19568 / NCTC 13146 / CH001A).